The following is a 1961-amino-acid chain: Ankyrin-3 (1961 aa).

The segment covering 1-10 has biased composition (basic and acidic residues); it reads MSEEPKEKPA. The disordered stretch occupies residues 1–25; it reads MSEEPKEKPAKPAHRKRKGKKSDAN. A compositionally biased stretch (basic residues) spans 11 to 20; that stretch reads KPAHRKRKGK. S22 is modified (phosphoserine). 23 ANK repeats span residues 56–85, 89–118, 122–151, 155–184, 186–213, 217–246, 250–279, 283–312, 316–345, 349–378, 382–411, 415–444, 448–477, 481–510, 514–543, 547–576, 580–609, 613–642, 646–675, 679–708, 712–741, 745–774, and 778–807; these read NGLNALHLASKEGHVEVVSELLQREANVDA, KGNTALHIASLAGQAEVVKVLVTNGANVNA, NGFTPLYMAAQENHLEVVRFLLDNGASQSL, DGFTPLAVALQQGHDQVVSLLLENDTKGKV, LPALHIAARKDDTKAAALLLQNDTNADV, SGFTPLHIAAHYGNINVATLLLNRAAAVDF, NDITPLHVASKRGNANMVKLLLDRGAKIDA, DGLTPLHCGARSGHEQVVEMLLDRSAPILS, NGLSPLHMATQGDHLNCVQLLLQHNVPVDD, DYLTALHVAAHCGHYKVAKVLLDKKASPNA, NGFTPLHIACKKNRIRVMELLLKHGASIQA, SGLTPIHVAAFMGHVNIVSQLMHHGASPNT, RGETALHMAARSGQAEVVRYLVQDGAQVEA, DDQTPLHISARLGKADIVQQLLQQGASPNA, SGYTPLHLAAREGHEDVAAFLLDHGASLSI, KGFTPLHVAAKYGKLEVASLLLQKSASPDA, SGLTPLHVAAHYDNQKVALLLLDQGASPHA, NGYTPLHIAAKKNQMDIATSLLEYGADANA, QGIASVHLAAQEGHVDMVSLLLSRNANVNL, SGLTPLHLAAQEDRVNVAEVLVNQGAHVDA, MGYTPLHVGCHYGNIKIVNFLLQHSAKVNA, NGYTALHQAAQQGHTHIINVLLQNNASPNE, and NGNTALAIARRLGYISVVDTLKVVTEEIMT. A Phosphoserine modification is found at S606. A Phosphoserine modification is found at L732. Phosphoserine occurs at positions 830, 844, 850, 873, 914, 917, 923, 958, 960, and 1114. ZU5 domains lie at 985–1140 and 1142–1289; these read FLVS…VVSR and KQES…LADC. A UPA domain region spans residues 1274–1408; that stretch reads VSFTTNVSAR…SIKIRDTSQE (135 aa). A phosphoserine mark is found at S1451, S1462, S1470, S1473, and G1560. Residues 1478–1562 form the Death domain; sequence TDIRMAIVAD…DIVTLLEGPI (85 aa). Disordered regions lie at residues 1606-1678, 1698-1740, 1784-1818, 1844-1884, and 1915-1961; these read PNPF…DPLD, SVPG…VTED, WQNETPSGSLESPAQARRLTGGLLDRLDDSSDQAR, PEAK…PVSP, and MTRT…KKTH. Positions 1725–1740 are enriched in basic and acidic residues; it reads QQEKGKSGPDEEVTED. The span at 1784–1795 shows a compositional bias: polar residues; the sequence is WQNETPSGSLES. S1795, S1813, and S1883 each carry phosphoserine. A compositionally biased stretch (basic and acidic residues) spans 1808–1818; sequence DRLDDSSDQAR. The span at 1933–1961 shows a compositional bias: basic and acidic residues; the sequence is GSTRSEPKQGEGYKVKTKKEIRNVEKKTH.

As to quaternary structure, may be a constituent of a NFASC/NRCAM/ankyrin G complex. Interacts with RHBG. Directly interacts with DMD and betaDAG1; this interaction does not interfere with DMD-binding and is required for DMD and betaDAG1 retention at costameres. Interacts (via N-terminal ANK repeats) with SCHIP1 isoform 7 (via C-terminus); this interaction is required for the localization at axon initial segments (AISs) and nodes of Ranvier (NRs). Interacts with PLEC and FLNC. Interacts with KCNA1; this inhibits channel activity. Interacts with SCN5A. Interacts with PKP2 and GJA1/CX43. As to expression, expressed in many epithelial tissues, muscles and axons. Expressed in kidney, brain, skin, lung, liver, intestine, pancreas, heart and testis (at protein level). In testis, expressed in Leydig cells, but very weakly or not at all in Sertoli cells or seminiferous tubules. Expressed in macrophages (at protein level).

Its subcellular location is the cytoplasm. It is found in the cytoskeleton. The protein resides in the cell projection. It localises to the axon. The protein localises to the cell membrane. Its subcellular location is the sarcolemma. It is found in the postsynaptic cell membrane. The protein resides in the lysosome. It localises to the T-tubule. Functionally, membrane-cytoskeleton linker. May participate in the maintenance/targeting of ion channels and cell adhesion molecules at the nodes of Ranvier and axonal initial segments. In skeletal muscle, required for costamere localization of DMD and betaDAG1. Regulates KCNA1 channel activity in function of dietary Mg(2+) levels, and thereby contributes to the regulation of renal Mg(2+) reabsorption. Required for intracellular adhesion and junctional conductance in myocytes, potentially via stabilization of GJA1/CX43 protein abundance and promotion of PKP2, GJA1/CX43, and SCN5A/Nav1.5 localization to cell-cell junctions. This Mus musculus (Mouse) protein is Ankyrin-3 (Ank3).